Reading from the N-terminus, the 205-residue chain is NADH dehydrogenase (205 aa).

Residues Arg-17–Arg-21, Gln-73, Leu-158–Gly-159, and Arg-195 contribute to the FMN site.

This sequence belongs to the nitroreductase family. In terms of assembly, homodimer. It depends on FMN as a cofactor.

The enzyme catalyses a ubiquinone + NADH + 5 H(+)(in) = a ubiquinol + NAD(+) + 4 H(+)(out). Can oxidize either NADH or NADPH with a preference for NADH. Can catalyze electron transfer from NADH to various electron acceptors which include, in addition to molecular oxygen, cytochrome c, 2,6 dichlorphenolindophenol, methylene blue, ferricyanide or P-nitroblue tetrazolium. In Thermus thermophilus (strain ATCC 27634 / DSM 579 / HB8), this protein is NADH dehydrogenase (nox).